We begin with the raw amino-acid sequence, 365 residues long: 25S rRNA (uridine(2843)-N(3))-methyltransferase (365 aa).

The protein belongs to the class I-like SAM-binding methyltransferase superfamily.

Its subcellular location is the cytoplasm. It localises to the nucleus. It carries out the reaction uridine(2843) in 25S rRNA + S-adenosyl-L-methionine = N(3)-methyluridine(2843) in 25S rRNA + S-adenosyl-L-homocysteine + H(+). Functionally, S-adenosyl-L-methionine-dependent methyltransferase that specifically methylates the N(3) position of uridine 2843 (m3U2843) in 25S rRNA. This Saccharomyces cerevisiae (strain ATCC 204508 / S288c) (Baker's yeast) protein is 25S rRNA (uridine(2843)-N(3))-methyltransferase (BMT6).